Here is a 207-residue protein sequence, read N- to C-terminus: Vascular endothelial growth factor B (207 aa).

A signal peptide spans M1 to A21. Disulfide bonds link C47–C89, C78–C122, and C82–C124. Residues K129–A139 show a composition bias toward basic and acidic residues. The segment at K129–L178 is disordered.

It belongs to the PDGF/VEGF growth factor family. Homodimer; disulfide-linked. Can also form heterodimer with VEGF. VEGF-B186 is O-glycosylated. As to expression, abundantly expressed in heart, brain, kidney and skeletal muscle.

The protein localises to the secreted. Functionally, growth factor for endothelial cells. VEGF-B167 binds heparin and neuropilin-1 whereas the binding to neuropilin-1 of VEGF-B186 is regulated by proteolysis. VEGF-B seems to be required for normal heart function in adult but is not required for proper development of the cardiovascular system either during development or for angiogenesis in adults. This chain is Vascular endothelial growth factor B (Vegfb), found in Mus musculus (Mouse).